An 887-amino-acid chain; its full sequence is Alanine--tRNA ligase (887 aa).

Residues His564, His568, Cys676, and His680 each contribute to the Zn(2+) site.

Belongs to the class-II aminoacyl-tRNA synthetase family. The cofactor is Zn(2+).

Its subcellular location is the cytoplasm. The enzyme catalyses tRNA(Ala) + L-alanine + ATP = L-alanyl-tRNA(Ala) + AMP + diphosphate. Its function is as follows. Catalyzes the attachment of alanine to tRNA(Ala) in a two-step reaction: alanine is first activated by ATP to form Ala-AMP and then transferred to the acceptor end of tRNA(Ala). Also edits incorrectly charged Ser-tRNA(Ala) and Gly-tRNA(Ala) via its editing domain. The polypeptide is Alanine--tRNA ligase (Sinorhizobium medicae (strain WSM419) (Ensifer medicae)).